The sequence spans 646 residues: UvrABC system protein B (646 aa).

The Helicase ATP-binding domain occupies 29 to 411 (LEKNPEKSKQ…SNQVVEQIIR (383 aa)). 42-49 (GVTGSGKT) is an ATP binding site. The Beta-hairpin signature appears at 95–118 (YYDYYQPESYIPQKDQYIEKDAQI). Residues 428–590 (QVEDIIKETE…ITPQTIVKPI (163 aa)) enclose the Helicase C-terminal domain. Positions 609–644 (PNVIVELEAEMYEAAEALEFEKAIKIRDTIAKLKKK) constitute a UVR domain.

This sequence belongs to the UvrB family. Forms a heterotetramer with UvrA during the search for lesions. Interacts with UvrC in an incision complex.

It is found in the cytoplasm. In terms of biological role, the UvrABC repair system catalyzes the recognition and processing of DNA lesions. A damage recognition complex composed of 2 UvrA and 2 UvrB subunits scans DNA for abnormalities. Upon binding of the UvrA(2)B(2) complex to a putative damaged site, the DNA wraps around one UvrB monomer. DNA wrap is dependent on ATP binding by UvrB and probably causes local melting of the DNA helix, facilitating insertion of UvrB beta-hairpin between the DNA strands. Then UvrB probes one DNA strand for the presence of a lesion. If a lesion is found the UvrA subunits dissociate and the UvrB-DNA preincision complex is formed. This complex is subsequently bound by UvrC and the second UvrB is released. If no lesion is found, the DNA wraps around the other UvrB subunit that will check the other stand for damage. This is UvrABC system protein B from Methanococcus maripaludis (strain DSM 14266 / JCM 13030 / NBRC 101832 / S2 / LL).